Consider the following 114-residue polypeptide: Progonadoliberin-2 (114 aa).

Residues 1 to 24 form the signal peptide; it reads MASSRRGLLLLLMLLTAHPGPSEA. Position 34 is a glycine amide (glycine 34). The segment at 35–59 is disordered; it reads GKRALSSAQDPQNALRPPAGSPAQA.

The protein belongs to the GnRH family.

Its subcellular location is the secreted. Stimulates the secretion of gonadotropins; it stimulates the secretion of both luteinizing and follicle-stimulating hormones. The polypeptide is Progonadoliberin-2 (GNRH2) (Macaca mulatta (Rhesus macaque)).